Consider the following 432-residue polypeptide: Glutamyl-tRNA reductase (432 aa).

Substrate contacts are provided by residues 55–58 (TCNR), S114, 119–121 (ETQ), and Q125. C56 acts as the Nucleophile in catalysis. 194 to 199 (GAGEMI) is a binding site for NADP(+).

Belongs to the glutamyl-tRNA reductase family. As to quaternary structure, homodimer.

It carries out the reaction (S)-4-amino-5-oxopentanoate + tRNA(Glu) + NADP(+) = L-glutamyl-tRNA(Glu) + NADPH + H(+). The protein operates within porphyrin-containing compound metabolism; protoporphyrin-IX biosynthesis; 5-aminolevulinate from L-glutamyl-tRNA(Glu): step 1/2. Its function is as follows. Catalyzes the NADPH-dependent reduction of glutamyl-tRNA(Glu) to glutamate 1-semialdehyde (GSA). The protein is Glutamyl-tRNA reductase of Burkholderia multivorans (strain ATCC 17616 / 249).